A 305-amino-acid chain; its full sequence is Ribosomal RNA small subunit methyltransferase H (305 aa).

Residues 46 to 48 (GGH), Asp65, Phe92, Asp108, and His115 contribute to the S-adenosyl-L-methionine site.

Belongs to the methyltransferase superfamily. RsmH family.

It localises to the cytoplasm. It carries out the reaction cytidine(1402) in 16S rRNA + S-adenosyl-L-methionine = N(4)-methylcytidine(1402) in 16S rRNA + S-adenosyl-L-homocysteine + H(+). Its function is as follows. Specifically methylates the N4 position of cytidine in position 1402 (C1402) of 16S rRNA. This is Ribosomal RNA small subunit methyltransferase H from Trichormus variabilis (strain ATCC 29413 / PCC 7937) (Anabaena variabilis).